Reading from the N-terminus, the 1118-residue chain is uncharacterized protein (1118 aa).

Disordered regions lie at residues M1–D69, P1044–D1071, and I1090–L1118. The span at D13–D34 shows a compositional bias: acidic residues. Over residues S35–K60 the composition is skewed to polar residues. Residues E1107 to L1118 show a composition bias toward acidic residues.

This is an uncharacterized protein from Caenorhabditis elegans.